Consider the following 309-residue polypeptide: Putative taste receptor type 2 member 33 (309 aa).

Met-1 is a topological domain (extracellular). Residues 2–22 (VYFLPIIFSILVVFAFVLGNF) form a helical membrane-spanning segment. Topologically, residues 23–46 (SNGFIALVNVIDWVKRQKISSADQ) are cytoplasmic. The chain crosses the membrane as a helical span at residues 47-67 (ILTALVVSRVGLLWVILLHWY). Residues 68-86 (ANVFNSALYSLEVRIVASN) are Extracellular-facing. The N-linked (GlcNAc...) asparagine glycan is linked to Asn-86. A helical membrane pass occupies residues 87-107 (ISAVINHFSIWLAASLSIFYL). The Cytoplasmic portion of the chain corresponds to 108 to 127 (LKIANFSNLIFLHLKKRIKS). A helical transmembrane segment spans residues 128–148 (VVLVILLGPLVFLICNLAVIT). The Extracellular segment spans residues 149–181 (MDERVWTKEYEGNVTWKIKLRNAIHLSSLTVTT). N-linked (GlcNAc...) asparagine glycosylation occurs at Asn-161. Residues 182–202 (LANLIPFTLSLICFLLLICSL) traverse the membrane as a helical segment. The Cytoplasmic segment spans residues 203-229 (CKHLKKMQLHSKGSQDPSTKVHIKALQ). The chain crosses the membrane as a helical span at residues 230–250 (TVISFLMLCAIYFLSIMISVW). Residues 251–259 (NLRSLENKP) are Extracellular-facing. A helical transmembrane segment spans residues 260-280 (VFMFCKAIRFSYPSIHPFILI). The Cytoplasmic segment spans residues 281–309 (WGNKKLKQTFLSVFWQVRYWVKGEKPSSP).

This sequence belongs to the G-protein coupled receptor T2R family.

It localises to the membrane. Putative taste receptor which may play a role in the perception of bitterness. This chain is Putative taste receptor type 2 member 33, found in Homo sapiens (Human).